A 191-amino-acid polypeptide reads, in one-letter code: Fe/S biogenesis protein NfuA (191 aa).

Residues Cys149 and Cys152 each contribute to the [4Fe-4S] cluster site.

This sequence belongs to the NfuA family. In terms of assembly, homodimer. The cofactor is [4Fe-4S] cluster.

In terms of biological role, involved in iron-sulfur cluster biogenesis. Binds a 4Fe-4S cluster, can transfer this cluster to apoproteins, and thereby intervenes in the maturation of Fe/S proteins. Could also act as a scaffold/chaperone for damaged Fe/S proteins. The chain is Fe/S biogenesis protein NfuA from Salmonella arizonae (strain ATCC BAA-731 / CDC346-86 / RSK2980).